Here is a 390-residue protein sequence, read N- to C-terminus: Succinate--CoA ligase [ADP-forming] subunit beta (390 aa).

An ATP-grasp domain is found at Lys9–Gln248. ATP is bound by residues Lys50, Gly57 to Gly59, Glu103, Ile106, and Glu111. Asn203 and Asp217 together coordinate Mg(2+). Substrate-binding positions include Asn268 and Gly325 to Val327.

This sequence belongs to the succinate/malate CoA ligase beta subunit family. In terms of assembly, heterotetramer of two alpha and two beta subunits. The cofactor is Mg(2+).

The enzyme catalyses succinate + ATP + CoA = succinyl-CoA + ADP + phosphate. The catalysed reaction is GTP + succinate + CoA = succinyl-CoA + GDP + phosphate. It participates in carbohydrate metabolism; tricarboxylic acid cycle; succinate from succinyl-CoA (ligase route): step 1/1. Its function is as follows. Succinyl-CoA synthetase functions in the citric acid cycle (TCA), coupling the hydrolysis of succinyl-CoA to the synthesis of either ATP or GTP and thus represents the only step of substrate-level phosphorylation in the TCA. The beta subunit provides nucleotide specificity of the enzyme and binds the substrate succinate, while the binding sites for coenzyme A and phosphate are found in the alpha subunit. The protein is Succinate--CoA ligase [ADP-forming] subunit beta of Leptospira borgpetersenii serovar Hardjo-bovis (strain JB197).